A 191-amino-acid chain; its full sequence is MDRMSMARQGWLVPCLSHGKDDQLQGELSELSKVYREKFQTDLHTKSGDIINPGGEFLYIYLDKENYRLCRQRMVLVSNASDGLLATTLEPYSDGYTFRQVRAQLQALSGDGGRINYSKNEYSSSYFLAIQASNEFERIGVVRNTFGQSKDVWKRKMPSAGQPLDYLLIAVGCSAFLPEAALEDVELDGAI.

This is an uncharacterized protein from Agrobacterium tumefaciens (strain Ach5).